An 82-amino-acid chain; its full sequence is Large ribosomal subunit protein uL23 (82 aa).

It belongs to the universal ribosomal protein uL23 family. Part of the 50S ribosomal subunit. Contacts protein L29.

Functionally, binds to 23S rRNA. One of the proteins that surrounds the polypeptide exit tunnel on the outside of the ribosome. The chain is Large ribosomal subunit protein uL23 from Methanosarcina acetivorans (strain ATCC 35395 / DSM 2834 / JCM 12185 / C2A).